The chain runs to 285 residues: Bifunctional protein FolD (285 aa).

NADP(+)-binding positions include 165 to 167 (GRS) and Ser190.

It belongs to the tetrahydrofolate dehydrogenase/cyclohydrolase family. As to quaternary structure, homodimer.

The catalysed reaction is (6R)-5,10-methylene-5,6,7,8-tetrahydrofolate + NADP(+) = (6R)-5,10-methenyltetrahydrofolate + NADPH. The enzyme catalyses (6R)-5,10-methenyltetrahydrofolate + H2O = (6R)-10-formyltetrahydrofolate + H(+). Its pathway is one-carbon metabolism; tetrahydrofolate interconversion. Its function is as follows. Catalyzes the oxidation of 5,10-methylenetetrahydrofolate to 5,10-methenyltetrahydrofolate and then the hydrolysis of 5,10-methenyltetrahydrofolate to 10-formyltetrahydrofolate. The chain is Bifunctional protein FolD from Burkholderia cenocepacia (strain HI2424).